The following is a 252-amino-acid chain: Ribosomal RNA small subunit methyltransferase J (252 aa).

Residues 104–105 (RD), 120–121 (ER), and Asp-174 contribute to the S-adenosyl-L-methionine site.

Belongs to the methyltransferase superfamily. RsmJ family.

Its subcellular location is the cytoplasm. The catalysed reaction is guanosine(1516) in 16S rRNA + S-adenosyl-L-methionine = N(2)-methylguanosine(1516) in 16S rRNA + S-adenosyl-L-homocysteine + H(+). Functionally, specifically methylates the guanosine in position 1516 of 16S rRNA. The chain is Ribosomal RNA small subunit methyltransferase J from Mannheimia succiniciproducens (strain KCTC 0769BP / MBEL55E).